The following is a 396-amino-acid chain: Elongation factor Tu (396 aa).

Residues 10 to 205 form the tr-type G domain; sequence KPHVNIGTIG…AVDESIPDPV (196 aa). Residues 19 to 26 form a G1 region; sequence GHVDHGKT. Residue 19–26 coordinates GTP; sequence GHVDHGKT. Thr26 is a binding site for Mg(2+). The segment at 62–66 is G2; that stretch reads GITIN. Positions 83–86 are G3; it reads DAPG. GTP-binding positions include 83-87 and 138-141; these read DAPGH and NKAD. Positions 138-141 are G4; sequence NKAD. A G5 region spans residues 175-177; the sequence is SAL.

This sequence belongs to the TRAFAC class translation factor GTPase superfamily. Classic translation factor GTPase family. EF-Tu/EF-1A subfamily. Monomer.

It localises to the cytoplasm. The catalysed reaction is GTP + H2O = GDP + phosphate + H(+). GTP hydrolase that promotes the GTP-dependent binding of aminoacyl-tRNA to the A-site of ribosomes during protein biosynthesis. The polypeptide is Elongation factor Tu (Mycobacterium bovis (strain ATCC BAA-935 / AF2122/97)).